We begin with the raw amino-acid sequence, 317 residues long: Toluene-4-sulfonate monooxygenase system reductase subunit TsaB1 (317 aa).

The FAD-binding FR-type domain occupies 2–108 (SADVPVTVAA…RATCSEMAPE (107 aa)). 110–220 (RRVLLLAGGI…PGSVRMERFK (111 aa)) contacts NAD(+). Residues 230–317 (QPFELVLQRA…CGGGRLVLDI (88 aa)) form the 2Fe-2S ferredoxin-type domain. 4 residues coordinate [2Fe-2S] cluster: Cys-266, Cys-271, Cys-274, and Cys-304.

Monomer. Part of the p-toluenesulfonate methyl-monooxygenase complex TsaBM, comprising the reductase TsaB and the oxygenase TsaM. FMN serves as cofactor.

Iron-sulfur flavoprotein carrying electrons from NADH to the oxygenase TsaM. Involved in the toluene-4-sulfonate degradation pathway. In Comamonas testosteroni (Pseudomonas testosteroni), this protein is Toluene-4-sulfonate monooxygenase system reductase subunit TsaB1 (tsaB1).